The sequence spans 55 residues: Large ribosomal subunit protein bL32 (55 aa).

Positions 1 to 23 (MAVPKKKTSKAKRDQRRAHWKRK) are enriched in basic residues. Positions 1 to 26 (MAVPKKKTSKAKRDQRRAHWKRKATI) are disordered.

Belongs to the bacterial ribosomal protein bL32 family.

In Picosynechococcus sp. (strain ATCC 27264 / PCC 7002 / PR-6) (Agmenellum quadruplicatum), this protein is Large ribosomal subunit protein bL32.